The chain runs to 247 residues: MSQSNSDDSASSSTQQAGDGQDDVQQNIVWHAHTVSREDRESKLGQRGVVVWFTGLSGCGKSTIANELDRLLIDRGATCTLLDGDNVRHGLCAPPSVLKEEHGEDFAGRFGLGFGPTDREENIRRIGAVTELFASAGVIVLAAFVSPYQRDRDRVRNTIESSGRAGDFLEVFVDTPLEICKQRDPKGLYQKAIAGEIKNFTGISDPYDAPPSPEIHLKWREGQTPHDQASEIIREMEKRGVLGPAKG.

Residues 1–24 form a disordered region; that stretch reads MSQSNSDDSASSSTQQAGDGQDDV. Residue 55–62 participates in ATP binding; it reads GLSGCGKS. The Phosphoserine intermediate role is filled by Ser146.

Belongs to the APS kinase family.

It catalyses the reaction adenosine 5'-phosphosulfate + ATP = 3'-phosphoadenylyl sulfate + ADP + H(+). It participates in sulfur metabolism; hydrogen sulfide biosynthesis; sulfite from sulfate: step 2/3. In terms of biological role, catalyzes the synthesis of activated sulfate. This is Adenylyl-sulfate kinase from Rhodopirellula baltica (strain DSM 10527 / NCIMB 13988 / SH1).